Reading from the N-terminus, the 701-residue chain is Elongation factor G (701 aa).

Residues 8 to 286 enclose the tr-type G domain; it reads DRVRNIGIIA…AVVLLLPSPL (279 aa). Residues 17–24, 85–89, and 139–142 each bind GTP; these read AHIDAGKT, DTPGH, and NKMD.

Belongs to the TRAFAC class translation factor GTPase superfamily. Classic translation factor GTPase family. EF-G/EF-2 subfamily.

The protein resides in the cytoplasm. Its function is as follows. Catalyzes the GTP-dependent ribosomal translocation step during translation elongation. During this step, the ribosome changes from the pre-translocational (PRE) to the post-translocational (POST) state as the newly formed A-site-bound peptidyl-tRNA and P-site-bound deacylated tRNA move to the P and E sites, respectively. Catalyzes the coordinated movement of the two tRNA molecules, the mRNA and conformational changes in the ribosome. In Herpetosiphon aurantiacus (strain ATCC 23779 / DSM 785 / 114-95), this protein is Elongation factor G.